Here is a 250-residue protein sequence, read N- to C-terminus: Putative inactive flavonol synthase 2 (250 aa).

The Fe2OG dioxygenase domain occupies 171–250 (TEYVMRINNY…EQWKVQECVA (80 aa)). Histidine 195 and aspartate 197 together coordinate Fe cation.

The protein belongs to the iron/ascorbate-dependent oxidoreductase family.

This chain is Putative inactive flavonol synthase 2 (FLS2), found in Arabidopsis thaliana (Mouse-ear cress).